Reading from the N-terminus, the 317-residue chain is Acetyl-coenzyme A carboxylase carboxyl transferase subunit alpha (317 aa).

A CoA carboxyltransferase C-terminal domain is found at 39-293; that stretch reads KLEGKAQEAL…GNAIAEAMGS (255 aa).

Belongs to the AccA family. As to quaternary structure, acetyl-CoA carboxylase is a heterohexamer composed of biotin carboxyl carrier protein (AccB), biotin carboxylase (AccC) and two subunits each of ACCase subunit alpha (AccA) and ACCase subunit beta (AccD).

The protein resides in the cytoplasm. The enzyme catalyses N(6)-carboxybiotinyl-L-lysyl-[protein] + acetyl-CoA = N(6)-biotinyl-L-lysyl-[protein] + malonyl-CoA. Its pathway is lipid metabolism; malonyl-CoA biosynthesis; malonyl-CoA from acetyl-CoA: step 1/1. In terms of biological role, component of the acetyl coenzyme A carboxylase (ACC) complex. First, biotin carboxylase catalyzes the carboxylation of biotin on its carrier protein (BCCP) and then the CO(2) group is transferred by the carboxyltransferase to acetyl-CoA to form malonyl-CoA. This Azorhizobium caulinodans (strain ATCC 43989 / DSM 5975 / JCM 20966 / LMG 6465 / NBRC 14845 / NCIMB 13405 / ORS 571) protein is Acetyl-coenzyme A carboxylase carboxyl transferase subunit alpha.